A 193-amino-acid polypeptide reads, in one-letter code: Thymidine kinase (193 aa).

ATP contacts are provided by residues 15–22 (GCMYSGKT) and 87–90 (DELH). Glutamate 88 (proton acceptor) is an active-site residue. Zn(2+) contacts are provided by cysteine 147, cysteine 150, cysteine 185, and cysteine 188.

This sequence belongs to the thymidine kinase family. Homotetramer.

The protein resides in the cytoplasm. It carries out the reaction thymidine + ATP = dTMP + ADP + H(+). This is Thymidine kinase from Chloroflexus aurantiacus (strain ATCC 29366 / DSM 635 / J-10-fl).